A 721-amino-acid polypeptide reads, in one-letter code: MSSLESSSESIAVNILGQTNRRVARAQAQAFIDTLKPLQHPNSQKLYLQGSRADLRVGMRQILQTDTRIGGRAAAPNVEKNPPIPVYDCAGPYSDPAAQINVRQGLAKLRLPWIIERQDTEVLDCTTSDFTQQRLKDDGLDHLRFEAGSSAIIRPRRALPGKRVSQLHYARQGIITPEMEYVAIRENMALADVQDEILNRRGQGESFGAVIGKPITPEFVRDEIARGRAIIPLNINHPEAEPMTIGRNFLVKVNANIGNSAVTSSIEEEVEKLVWSTRWGADTVMDLSTGRYIHETREWIIRNSPVPIGTVPIYQALEKVNGVAEHLTWEVFRDTLIEQAEQGVDYFTIHAGVLLRYVPMTAKRVTGIVSRGGSIMAKWCLSHHQENFLYTHFREICELCVAYDVSLSLGDGMRPGSIADANDEAQFAELETLGELVNIAWEYDVQTIIEGPGHIPMQLIKENMDKQLIHCAEAPFYTLGPQITDIAPGYDHFTSGIGAAMIAWYGCAMLCYVTPKEHLGLPNKQDVKQGLIAYKIAAHAADIAKGHPGAQIRDNALSKARFEFRWEDQYNLGLDPDTARAYHDESLPQESAKVAHFCSMCGPKFCSMKITQDVRDYAASLEADAKAQSLAAETDGALAPLGSVQQVKSGHSELSHIDAELNYIAVKTQDELTAAMAQKSAEFAALGAKLYLPLDNANAANELAKHKDGAKLQSKTQVAKV.

Substrate contacts are provided by residues Asn-256, Met-285, Tyr-314, His-350, 370-372 (SRG), 411-414 (DGMR), and Glu-450. His-454 serves as a coordination point for Zn(2+). Residue Tyr-477 coordinates substrate. His-518 lines the Zn(2+) pocket. Positions 598, 601, and 606 each coordinate [4Fe-4S] cluster.

The protein belongs to the ThiC family. Homodimer. [4Fe-4S] cluster serves as cofactor.

It catalyses the reaction 5-amino-1-(5-phospho-beta-D-ribosyl)imidazole + S-adenosyl-L-methionine = 4-amino-2-methyl-5-(phosphooxymethyl)pyrimidine + CO + 5'-deoxyadenosine + formate + L-methionine + 3 H(+). It participates in cofactor biosynthesis; thiamine diphosphate biosynthesis. Catalyzes the synthesis of the hydroxymethylpyrimidine phosphate (HMP-P) moiety of thiamine from aminoimidazole ribotide (AIR) in a radical S-adenosyl-L-methionine (SAM)-dependent reaction. This chain is Phosphomethylpyrimidine synthase, found in Shewanella oneidensis (strain ATCC 700550 / JCM 31522 / CIP 106686 / LMG 19005 / NCIMB 14063 / MR-1).